The sequence spans 492 residues: Adenosylhomocysteinase (492 aa).

Substrate is bound by residues threonine 68, aspartate 153, and glutamate 215. NAD(+) is bound at residue 216-218; the sequence is TTT. Positions 245 and 249 each coordinate substrate. Residues asparagine 250, 279–284, glutamate 302, asparagine 337, 358–360, and asparagine 406 each bind NAD(+); these read GYGDVG and IGH.

This sequence belongs to the adenosylhomocysteinase family. The cofactor is NAD(+).

It localises to the cytoplasm. It carries out the reaction S-adenosyl-L-homocysteine + H2O = L-homocysteine + adenosine. The protein operates within amino-acid biosynthesis; L-homocysteine biosynthesis; L-homocysteine from S-adenosyl-L-homocysteine: step 1/1. Its function is as follows. May play a key role in the regulation of the intracellular concentration of adenosylhomocysteine. This chain is Adenosylhomocysteinase, found in Mycobacterium marinum (strain ATCC BAA-535 / M).